The chain runs to 617 residues: Type VII secretion systems protein EssD (617 aa).

Residues 420-448 (QNHVTHGPKDSMVRSEGKHSISSHEMNSS) are disordered. A compositionally biased stretch (basic and acidic residues) spans 426–438 (GPKDSMVRSEGKH).

The protein belongs to the EssD family. As to quaternary structure, interacts (via C-terminal) with EssG; this interaction blocks EssD activity. Interacts with EssE.

It is found in the secreted. Its subcellular location is the cell membrane. Its function is as follows. Component of the type VII secretion system (Ess). Plays a role in Ess secretion during infection. Required for the efficient secretion of EsxA. Required for abscess formation and staphylococcal persistence in host tissue. Possesses a toxic DNase activity that is modulated by EssG by forming a nuclease toxin-antitoxin pair. This nuclease toxin targets competitor bacteria. In Staphylococcus aureus (strain Newman), this protein is Type VII secretion systems protein EssD.